We begin with the raw amino-acid sequence, 354 residues long: UDP-N-acetylglucosamine--N-acetylmuramyl-(pentapeptide) pyrophosphoryl-undecaprenol N-acetylglucosamine transferase (354 aa).

UDP-N-acetyl-alpha-D-glucosamine contacts are provided by residues 13–15, N125, S189, I242, 261–266, and Q286; these read SGG and ALTVSE.

It belongs to the glycosyltransferase 28 family. MurG subfamily.

The protein localises to the cell inner membrane. The catalysed reaction is di-trans,octa-cis-undecaprenyl diphospho-N-acetyl-alpha-D-muramoyl-L-alanyl-D-glutamyl-meso-2,6-diaminopimeloyl-D-alanyl-D-alanine + UDP-N-acetyl-alpha-D-glucosamine = di-trans,octa-cis-undecaprenyl diphospho-[N-acetyl-alpha-D-glucosaminyl-(1-&gt;4)]-N-acetyl-alpha-D-muramoyl-L-alanyl-D-glutamyl-meso-2,6-diaminopimeloyl-D-alanyl-D-alanine + UDP + H(+). It functions in the pathway cell wall biogenesis; peptidoglycan biosynthesis. In terms of biological role, cell wall formation. Catalyzes the transfer of a GlcNAc subunit on undecaprenyl-pyrophosphoryl-MurNAc-pentapeptide (lipid intermediate I) to form undecaprenyl-pyrophosphoryl-MurNAc-(pentapeptide)GlcNAc (lipid intermediate II). This is UDP-N-acetylglucosamine--N-acetylmuramyl-(pentapeptide) pyrophosphoryl-undecaprenol N-acetylglucosamine transferase from Buchnera aphidicola subsp. Acyrthosiphon pisum (strain 5A).